Reading from the N-terminus, the 164-residue chain is Respiratory growth induced protein 2 (164 aa).

It belongs to the RGI1 family.

Its subcellular location is the cytoplasm. Involved in the control of energetic metabolism and significantly contribute to cell fitness, especially under respiratory growth conditions. This chain is Respiratory growth induced protein 2 (RGI2), found in Saccharomyces cerevisiae (strain RM11-1a) (Baker's yeast).